The sequence spans 191 residues: dTTP/UTP pyrophosphatase (191 aa).

Asp69 acts as the Proton acceptor in catalysis.

This sequence belongs to the Maf family. YhdE subfamily. Requires a divalent metal cation as cofactor.

The protein localises to the cytoplasm. The catalysed reaction is dTTP + H2O = dTMP + diphosphate + H(+). It catalyses the reaction UTP + H2O = UMP + diphosphate + H(+). Functionally, nucleoside triphosphate pyrophosphatase that hydrolyzes dTTP and UTP. May have a dual role in cell division arrest and in preventing the incorporation of modified nucleotides into cellular nucleic acids. The polypeptide is dTTP/UTP pyrophosphatase (Pelotomaculum thermopropionicum (strain DSM 13744 / JCM 10971 / SI)).